The following is a 309-amino-acid chain: Zinc finger protein-like 1 homolog (309 aa).

Residues 1–43 form a B box-type; degenerate zinc finger; that stretch reads MGLCKCPKRKVTNLFCYEHRVNVCEFCLVDNHPNCVVQSYLTW. The segment at 53–101 adopts an RING-type; atypical zinc-finger fold; that stretch reads CSLCKTTLAEGDTIRLNCLHLLHWKCFDEWAANFPATTAPAGYRCPCCS. Residues 200-221 form a disordered region; sequence GAESSSDTRPLLQLRDADNEEN. A helical transmembrane segment spans residues 254-274; sequence KIALFVIFLAVLALITIIMVM.

The protein belongs to the ZFPL1 family.

The protein resides in the membrane. The chain is Zinc finger protein-like 1 homolog from Caenorhabditis elegans.